Consider the following 245-residue polypeptide: 14-3-3 protein theta (245 aa).

M1 bears the N-acetylmethionine mark. The residue at position 3 (K3) is an N6-acetyllysine. K49 is modified (N6-acetyllysine; alternate). Residue K49 forms a Glycyl lysine isopeptide (Lys-Gly) (interchain with G-Cter in SUMO2); alternate linkage. N6-acetyllysine is present on K68. Y82 is modified (3'-nitrotyrosine). Position 92 is a phosphoserine (S92). Y104 carries the 3'-nitrotyrosine modification. The residue at position 115 (K115) is an N6-acetyllysine. S232 carries the phosphoserine; by CK1 modification.

The protein belongs to the 14-3-3 family. Homodimer. Interacts with CDK16. Interacts with RGS7 (phosphorylated form). Interacts with SSH1. Interacts with CDKN1B ('Thr-198' phosphorylated form); the interaction translocates CDKN1B to the cytoplasm. Interacts with GAB2. Interacts with the 'Ser-241' phosphorylated form of PDPK1. Interacts with the 'Thr-369' phosphorylated form of DAPK2. Interacts with PI4KB, TBC1D22A and TBC1D22B. Interacts with SLITRK1. Interacts with RIPOR2. Interacts with INAVA; the interaction increases upon PRR (pattern recognition receptor) stimulation and is required for cellular signaling pathway activation and cytokine secretion. Interacts with MARK2, MARK3 and MARK4. Interacts with MEFV.

The protein resides in the cytoplasm. In terms of biological role, adapter protein implicated in the regulation of a large spectrum of both general and specialized signaling pathways. Binds to a large number of partners, usually by recognition of a phosphoserine or phosphothreonine motif. Binding generally results in the modulation of the activity of the binding partner. Negatively regulates the kinase activity of PDPK1. The polypeptide is 14-3-3 protein theta (YWHAQ) (Bos taurus (Bovine)).